A 942-amino-acid chain; its full sequence is Protein inturned (942 aa).

The tract at residues 1-52 (MASVASCDSRPSSDELPGDPSSQEEDEDYDFEDRVSDSGSYSSASSDYDDLE) is disordered. The segment covering 22–31 (SQEEDEDYDF) has biased composition (acidic residues). The span at 37-46 (DSGSYSSASS) shows a compositional bias: low complexity. The PDZ domain maps to 185–263 (LVGIIHQTKW…PMQVKLTFEN (79 aa)). Phosphoserine occurs at positions 670 and 674. The interval 704–754 (TRKPSPSCSSGGSDNGCEGGEDDGFSPHTTPDAVRKQRESQGSDGLEESGT) is disordered.

The protein belongs to the inturned family. As to quaternary structure, component of the CPLANE (ciliogenesis and planar polarity effectors) complex, composed of INTU, FUZ and WDPCP. Interacts with CPLANE1. Interacts with NPHP4 and DAAM1; INTU is mediating the interaction between NPHP4 and DAAM1.

Its subcellular location is the cytoplasm. It is found in the cell surface. The protein localises to the cytoskeleton. It localises to the cilium basal body. The protein resides in the microtubule organizing center. Its subcellular location is the centrosome. It is found in the centriole. In terms of biological role, plays a key role in ciliogenesis and embryonic development. Regulator of cilia formation by controlling the organization of the apical actin cytoskeleton and the positioning of the basal bodies at the apical cell surface, which in turn is essential for the normal orientation of elongating ciliary microtubules. Plays a key role in definition of cell polarity via its role in ciliogenesis but not via conversion extension. Has an indirect effect on hedgehog signaling. Proposed to function as core component of the CPLANE (ciliogenesis and planar polarity effectors) complex involved in the recruitment of peripheral IFT-A proteins to basal bodies. Required for recruitment of CPLANE2 to the mother centriole. Binds phosphatidylinositol 3-phosphate with highest affinity, followed by phosphatidylinositol 4-phosphate and phosphatidylinositol 5-phosphate. This Homo sapiens (Human) protein is Protein inturned (INTU).